The sequence spans 234 residues: 2-phospho-L-lactate guanylyltransferase (234 aa).

The protein belongs to the CofC family. In terms of assembly, homodimer.

It carries out the reaction (2S)-2-phospholactate + GTP + H(+) = (2S)-lactyl-2-diphospho-5'-guanosine + diphosphate. Its pathway is cofactor biosynthesis; coenzyme F420 biosynthesis. Its function is as follows. Guanylyltransferase that catalyzes the activation of (2S)-2-phospholactate (2-PL) as (2S)-lactyl-2-diphospho-5'-guanosine, via the condensation of 2-PL with GTP. It is involved in the biosynthesis of coenzyme F420, a hydride carrier cofactor. The polypeptide is 2-phospho-L-lactate guanylyltransferase (Methanobrevibacter ruminantium (strain ATCC 35063 / DSM 1093 / JCM 13430 / OCM 146 / M1) (Methanobacterium ruminantium)).